Reading from the N-terminus, the 406-residue chain is Zinc finger CCCH domain-containing protein 15 homolog (406 aa).

The span at 1 to 11 (MPPKKAPAGPS) shows a compositional bias: low complexity. Residues 1 to 70 (MPPKKAPAGP…DKKKDEKEKK (70 aa)) are disordered. A compositionally biased stretch (basic and acidic residues) spans 12–28 (KKTEQKKKEKVIEDKTF). Positions 38 to 50 (QQKFIQQVQKQVQ) are enriched in low complexity. Residues 56–70 (PRQDGDKKKDEKEKK) show a composition bias toward basic and acidic residues. Residues 57-82 (RQDGDKKKDEKEKKLADLREMASIFK) are a coiled coil. 2 C3H1-type zinc fingers span residues 94 to 121 (DPKS…HDLS) and 166 to 203 (PTTE…HALP). Residues 336 to 382 (VDGSGTIASSTRLLDQATEAAKTAAAEDGAASDDENPSSSAPANDAA) are disordered. Low complexity-rich tracts occupy residues 352–364 (ATEA…AEDG) and 372–382 (PSSSAPANDAA).

It belongs to the ZC3H15/TMA46 family.

The sequence is that of Zinc finger CCCH domain-containing protein 15 homolog from Drosophila pseudoobscura pseudoobscura (Fruit fly).